We begin with the raw amino-acid sequence, 156 residues long: Protein-export protein SecB (156 aa).

It belongs to the SecB family. As to quaternary structure, homotetramer, a dimer of dimers. One homotetramer interacts with 1 SecA dimer.

The protein localises to the cytoplasm. Functionally, one of the proteins required for the normal export of preproteins out of the cell cytoplasm. It is a molecular chaperone that binds to a subset of precursor proteins, maintaining them in a translocation-competent state. It also specifically binds to its receptor SecA. This is Protein-export protein SecB from Aliivibrio fischeri (strain ATCC 700601 / ES114) (Vibrio fischeri).